Reading from the N-terminus, the 155-residue chain is Large ribosomal subunit protein eL19 (155 aa).

Basic residues predominate over residues 66 to 84 (VRHLQRRKGRRRGMGRRKG). Positions 66 to 85 (VRHLQRRKGRRRGMGRRKGV) are disordered.

Belongs to the eukaryotic ribosomal protein eL19 family. As to quaternary structure, part of the 50S ribosomal subunit.

Binds to the 23S rRNA. The protein is Large ribosomal subunit protein eL19 of Aeropyrum pernix (strain ATCC 700893 / DSM 11879 / JCM 9820 / NBRC 100138 / K1).